We begin with the raw amino-acid sequence, 360 residues long: Alpha-N-acetyl-neuraminyl-2,3-beta-galactosyl-1,3-N-acetyl-galactosaminide alpha-2,6-sialyltransferase (360 aa).

Residues 1 to 71 lie on the Cytoplasmic side of the membrane; sequence MEHVVTCWRL…PGRLLLLTLC (71 aa). A helical; Signal-anchor for type II membrane protein transmembrane segment spans residues 72–94; it reads ILTFSAVCVFLCCWACLPLCLAT. Residues 95-360 lie on the Lumenal side of the membrane; sequence CLDRHLPAAP…VFAHPSWRAK (266 aa). Cysteines 134 and 283 form a disulfide. N-linked (GlcNAc...) asparagine glycosylation occurs at Asn-193.

It belongs to the glycosyltransferase 29 family. High expression in brain and colon and to a lesser extent in lung, heart, kidney, spleen and thymus.

The protein localises to the golgi apparatus membrane. It carries out the reaction an alpha-Neu5Ac-(2-&gt;3)-beta-D-Gal-(1-&gt;3)-D-GlcNAc derivative + CMP-N-acetyl-beta-neuraminate = an alpha-Neu5Ac-(2-&gt;3)-beta-D-Gal-(1-&gt;3)-[alpha-Neu5Ac-(2-&gt;6)]-D-GlcNAc derivative + CMP + H(+). The catalysed reaction is N-acetyl-alpha-neuraminosyl-(2-&gt;3)-beta-D-galactosyl-(1-&gt;3)-N-acetyl-D-galactosamine + CMP-N-acetyl-beta-neuraminate = N-acetyl-alpha-neuraminosyl-(2-&gt;3)-beta-D-galactosyl-(1-&gt;3)-[N-acetyl-alpha-neuraminosyl-(2-&gt;6)]-N-acetyl-D-galactosamine + CMP + H(+). It catalyses the reaction a ganglioside GM1b (d18:1(4E)) + CMP-N-acetyl-beta-neuraminate = a ganglioside GD1alpha (d18:1(4E)) + CMP + H(+). The enzyme catalyses 3-O-[alpha-Neu5Ac-(2-&gt;3)-beta-D-Gal-(1-&gt;3)-alpha-D-GalNAc]-L-Ser-[protein] + CMP-N-acetyl-beta-neuraminate = a 3-O-{alpha-Neu5Ac-(2-&gt;3)-beta-D-Gal-(1-&gt;3)-[alpha-Neu5Ac-(2-&gt;6)]-alpha-D-GalNAc}-L-seryl-[protein] + CMP + H(+). It carries out the reaction 3-O-[alpha-Neu5Ac-(2-&gt;3)-beta-D-Gal-(1-&gt;3)-alpha-D-GalNAc]-L-Thr-[protein] + CMP-N-acetyl-beta-neuraminate = a 3-O-{alpha-Neu5Ac-(2-&gt;3)-beta-D-Gal-(1-&gt;3)-[alpha-Neu5Ac-(2-&gt;6)]-alpha-D-GalNAc}-L-threonyl-[protein] + CMP + H(+). It functions in the pathway protein modification; protein glycosylation. It participates in glycolipid biosynthesis. Functionally, transfers the sialyl group (N-acetyl-alpha-neuraminyl or NeuAc) from CMP-NeuAc to the GalNAc residue on the NeuAc-alpha-2,3-Gal-beta-1,3-GalNAc sequence of glycoproteins and glycolipids forming an alpha-2,6-linkage. Produces branched type disialyl structures by transfer of a sialyl group onto a GalNAc residue inside the backbone core chains. Prefers O-glycans to glycoproteins or glycolipids. In Mus musculus (Mouse), this protein is Alpha-N-acetyl-neuraminyl-2,3-beta-galactosyl-1,3-N-acetyl-galactosaminide alpha-2,6-sialyltransferase (St6galnac4).